The following is a 202-amino-acid chain: Glycerol-3-phosphate acyltransferase (202 aa).

The next 4 membrane-spanning stretches (helical) occupy residues 11-31 (VLIAALVLGYACGAIPFGLIL), 87-107 (PALAAGLGAFLGHLFPVWLGF), 116-136 (FIGVLLALSPVTLAAFAAIWL), and 158-178 (LILWALGHGAVAALFLVLAAL).

This sequence belongs to the PlsY family. As to quaternary structure, probably interacts with PlsX.

It localises to the cell inner membrane. It carries out the reaction an acyl phosphate + sn-glycerol 3-phosphate = a 1-acyl-sn-glycero-3-phosphate + phosphate. It functions in the pathway lipid metabolism; phospholipid metabolism. Its function is as follows. Catalyzes the transfer of an acyl group from acyl-phosphate (acyl-PO(4)) to glycerol-3-phosphate (G3P) to form lysophosphatidic acid (LPA). This enzyme utilizes acyl-phosphate as fatty acyl donor, but not acyl-CoA or acyl-ACP. The polypeptide is Glycerol-3-phosphate acyltransferase (Methylorubrum extorquens (strain PA1) (Methylobacterium extorquens)).